We begin with the raw amino-acid sequence, 840 residues long: Probable alpha-glucuronidase A (840 aa).

Residues 1 to 19 (MWSGIPVFALLSSIGIAAA) form the signal peptide. Asn50, Asn149, Asn222, Asn262, Asn279, Asn310, Asn465, Asn527, Asn576, Asn610, Asn682, Asn723, and Asn732 each carry an N-linked (GlcNAc...) asparagine glycan.

It belongs to the glycosyl hydrolase 67 family.

The protein resides in the secreted. The enzyme catalyses an alpha-D-glucuronoside + H2O = D-glucuronate + an alcohol. Its function is as follows. Alpha-glucuronidase involved in the hydrolysis of xylan, a major structural heterogeneous polysaccharide found in plant biomass representing the second most abundant polysaccharide in the biosphere, after cellulose. Releases 4-O-methylglucuronic acid from xylan. This is Probable alpha-glucuronidase A (aguA) from Neosartorya fischeri (strain ATCC 1020 / DSM 3700 / CBS 544.65 / FGSC A1164 / JCM 1740 / NRRL 181 / WB 181) (Aspergillus fischerianus).